The primary structure comprises 405 residues: L-cysteine:1D-myo-inositol 2-amino-2-deoxy-alpha-D-glucopyranoside ligase (405 aa).

Cys-43 is a binding site for Zn(2+). Residues 43–46 (CGIT), Thr-58, and 81–83 (NIT) contribute to the L-cysteinyl-5'-AMP site. The 'HIGH' region signature appears at 45-55 (ITPYDATHLGH). A 'ERGGDP' region motif is present at residues 187–192 (ERGGDP). L-cysteinyl-5'-AMP is bound at residue Trp-227. Cys-231 lines the Zn(2+) pocket. 249–251 (GSD) contacts L-cysteinyl-5'-AMP. His-256 contributes to the Zn(2+) binding site. Position 283 (Ile-283) interacts with L-cysteinyl-5'-AMP. The short motif at 289–293 (KMSKS) is the 'KMSKS' region element.

This sequence belongs to the class-I aminoacyl-tRNA synthetase family. MshC subfamily. In terms of assembly, monomer. The cofactor is Zn(2+).

It carries out the reaction 1D-myo-inositol 2-amino-2-deoxy-alpha-D-glucopyranoside + L-cysteine + ATP = 1D-myo-inositol 2-(L-cysteinylamino)-2-deoxy-alpha-D-glucopyranoside + AMP + diphosphate + H(+). Catalyzes the ATP-dependent condensation of GlcN-Ins and L-cysteine to form L-Cys-GlcN-Ins. This is L-cysteine:1D-myo-inositol 2-amino-2-deoxy-alpha-D-glucopyranoside ligase from Nakamurella multipartita (strain ATCC 700099 / DSM 44233 / CIP 104796 / JCM 9543 / NBRC 105858 / Y-104) (Microsphaera multipartita).